The following is a 248-amino-acid chain: 2,3-bisphosphoglycerate-dependent phosphoglycerate mutase (248 aa).

Substrate is bound by residues Arg8 to Asn15, Thr21 to Gly22, Arg60, Glu87 to Tyr90, Lys98, Arg114 to Arg115, and Gly183 to Asn184. His9 serves as the catalytic Tele-phosphohistidine intermediate. The active-site Proton donor/acceptor is Glu87.

It belongs to the phosphoglycerate mutase family. BPG-dependent PGAM subfamily.

The enzyme catalyses (2R)-2-phosphoglycerate = (2R)-3-phosphoglycerate. It participates in carbohydrate degradation; glycolysis; pyruvate from D-glyceraldehyde 3-phosphate: step 3/5. Catalyzes the interconversion of 2-phosphoglycerate and 3-phosphoglycerate. This Porphyromonas gingivalis (strain ATCC 33277 / DSM 20709 / CIP 103683 / JCM 12257 / NCTC 11834 / 2561) protein is 2,3-bisphosphoglycerate-dependent phosphoglycerate mutase.